Reading from the N-terminus, the 504-residue chain is Histidine ammonia-lyase (504 aa).

Positions 142-144 (ASG) form a cross-link, 5-imidazolinone (Ala-Gly). Serine 143 bears the 2,3-didehydroalanine (Ser) mark.

The protein belongs to the PAL/histidase family. In terms of processing, contains an active site 4-methylidene-imidazol-5-one (MIO), which is formed autocatalytically by cyclization and dehydration of residues Ala-Ser-Gly.

Its subcellular location is the cytoplasm. The catalysed reaction is L-histidine = trans-urocanate + NH4(+). Its pathway is amino-acid degradation; L-histidine degradation into L-glutamate; N-formimidoyl-L-glutamate from L-histidine: step 1/3. In Staphylococcus aureus (strain JH1), this protein is Histidine ammonia-lyase.